A 252-amino-acid polypeptide reads, in one-letter code: Probable transcriptional regulatory protein Npun_R5651 (252 aa).

It belongs to the TACO1 family.

It localises to the cytoplasm. The sequence is that of Probable transcriptional regulatory protein Npun_R5651 from Nostoc punctiforme (strain ATCC 29133 / PCC 73102).